We begin with the raw amino-acid sequence, 236 residues long: N-acetyl-alpha-D-glucosaminyl L-malate deacetylase 1 (236 aa).

Residues His-12, Asp-15, and His-113 each contribute to the Zn(2+) site.

It belongs to the PIGL family. Zn(2+) is required as a cofactor.

The enzyme catalyses (S)-malyl N-acetyl-alpha-D-glucosaminide + H2O = (S)-malyl alpha-D-glucosaminide + acetate. In terms of biological role, involved in bacillithiol (BSH) biosynthesis. Catalyzes the second step of the pathway, the deacetylation of N-acetylglucosaminylmalate (GlcNAc-Mal) to glucosamine malate (GlcN-Mal). The polypeptide is N-acetyl-alpha-D-glucosaminyl L-malate deacetylase 1 (Bacillus subtilis (strain 168)).